We begin with the raw amino-acid sequence, 169 residues long: Large ribosomal subunit protein uL10 (169 aa).

This sequence belongs to the universal ribosomal protein uL10 family. In terms of assembly, part of the ribosomal stalk of the 50S ribosomal subunit. The N-terminus interacts with L11 and the large rRNA to form the base of the stalk. The C-terminus forms an elongated spine to which L12 dimers bind in a sequential fashion forming a multimeric L10(L12)X complex.

In terms of biological role, forms part of the ribosomal stalk, playing a central role in the interaction of the ribosome with GTP-bound translation factors. The chain is Large ribosomal subunit protein uL10 from Rickettsia bellii (strain OSU 85-389).